The following is a 332-amino-acid chain: N-acetyl-gamma-glutamyl-phosphate reductase (332 aa).

The active site involves Cys144.

Belongs to the NAGSA dehydrogenase family. Type 1 subfamily.

The protein resides in the cytoplasm. It catalyses the reaction N-acetyl-L-glutamate 5-semialdehyde + phosphate + NADP(+) = N-acetyl-L-glutamyl 5-phosphate + NADPH + H(+). Its pathway is amino-acid biosynthesis; L-arginine biosynthesis; N(2)-acetyl-L-ornithine from L-glutamate: step 3/4. Catalyzes the NADPH-dependent reduction of N-acetyl-5-glutamyl phosphate to yield N-acetyl-L-glutamate 5-semialdehyde. This is N-acetyl-gamma-glutamyl-phosphate reductase from Archaeoglobus fulgidus (strain ATCC 49558 / DSM 4304 / JCM 9628 / NBRC 100126 / VC-16).